The following is a 426-amino-acid chain: Glutamyl-tRNA reductase (426 aa).

Residues 49 to 52, Ser-101, 106 to 108, and Gln-112 contribute to the substrate site; these read TCNR and EPQ. Cys-50 functions as the Nucleophile in the catalytic mechanism. 181 to 186 is a binding site for NADP(+); that stretch reads GAGETI. Positions 404 to 426 are disordered; that stretch reads DRLFPEKPGLPTSPHSYPDREDR.

It belongs to the glutamyl-tRNA reductase family. As to quaternary structure, homodimer.

The catalysed reaction is (S)-4-amino-5-oxopentanoate + tRNA(Glu) + NADP(+) = L-glutamyl-tRNA(Glu) + NADPH + H(+). It participates in porphyrin-containing compound metabolism; protoporphyrin-IX biosynthesis; 5-aminolevulinate from L-glutamyl-tRNA(Glu): step 1/2. Catalyzes the NADPH-dependent reduction of glutamyl-tRNA(Glu) to glutamate 1-semialdehyde (GSA). The polypeptide is Glutamyl-tRNA reductase (Xanthomonas campestris pv. phaseoli).